The sequence spans 674 residues: Xaa-Pro aminopeptidase 2 (674 aa).

A signal peptide spans 1–22 (MAQAYWQCYPWLVLLCACAWSY). N-linked (GlcNAc...) asparagine glycosylation occurs at Asn-65. Substrate is bound at residue Arg-116. N-linked (GlcNAc...) asparagine glycosylation is found at Asn-270, Asn-278, and Asn-293. Position 430 (His-430) interacts with substrate. Zn(2+)-binding residues include Asp-450, Asp-461, and His-524. Residues His-524, His-533, and Glu-555 each contribute to the substrate site. Zn(2+) contacts are provided by Glu-555 and Glu-569. Ala-650 carries GPI-anchor amidated alanine lipidation. A propeptide spans 651 to 674 (RAPHIISWTSLWVASALAILSWSS) (removed in mature form).

The protein belongs to the peptidase M24B family. In terms of assembly, homotrimer. Zn(2+) is required as a cofactor. N-glycosylated. In terms of tissue distribution, strongly expressed in small intestine, heart and lung. Also detected in testis, skeletal muscle, spleen, liver, kidney, brain, uterus, eye, lymph node, thymus, stomach, prostate and bone marrow.

It localises to the cell membrane. The catalysed reaction is Release of any N-terminal amino acid, including proline, that is linked to proline, even from a dipeptide or tripeptide.. In terms of biological role, membrane-bound metalloprotease which catalyzes the removal of a penultimate prolyl residue from the N-termini of peptides, such as Arg-Pro-Pro. May play a role in the metabolism of the vasodilator bradykinin. This Mus musculus (Mouse) protein is Xaa-Pro aminopeptidase 2.